A 454-amino-acid chain; its full sequence is Argininosuccinate synthase (454 aa).

ATP is bound by residues 17 to 25 (AFSGGLDTS) and Ala43. Tyr99 provides a ligand contact to L-citrulline. Residues Gly129 and Thr131 each contribute to the ATP site. L-aspartate is bound by residues Thr131, Asn135, and Asp136. Asn135 is a binding site for L-citrulline. Asp136 contributes to the ATP binding site. Residues Arg139 and Ser192 each coordinate L-citrulline. ATP is bound at residue Asp194. Residues Thr201, Glu203, and Glu280 each contribute to the L-citrulline site.

It belongs to the argininosuccinate synthase family. Type 2 subfamily. As to quaternary structure, homotetramer.

Its subcellular location is the cytoplasm. It carries out the reaction L-citrulline + L-aspartate + ATP = 2-(N(omega)-L-arginino)succinate + AMP + diphosphate + H(+). It participates in amino-acid biosynthesis; L-arginine biosynthesis; L-arginine from L-ornithine and carbamoyl phosphate: step 2/3. The polypeptide is Argininosuccinate synthase (Yersinia enterocolitica serotype O:8 / biotype 1B (strain NCTC 13174 / 8081)).